Reading from the N-terminus, the 198-residue chain is Ribonuclease HII (198 aa).

The RNase H type-2 domain maps to Gln-10–Ser-198. Asp-16, Glu-17, and Asp-108 together coordinate a divalent metal cation.

It belongs to the RNase HII family. Requires Mn(2+) as cofactor. The cofactor is Mg(2+).

Its subcellular location is the cytoplasm. It catalyses the reaction Endonucleolytic cleavage to 5'-phosphomonoester.. Endonuclease that specifically degrades the RNA of RNA-DNA hybrids. The polypeptide is Ribonuclease HII (Shigella sonnei (strain Ss046)).